We begin with the raw amino-acid sequence, 309 residues long: Probable manganese-dependent inorganic pyrophosphatase (309 aa).

Mn(2+)-binding residues include His9, Asp13, Asp15, Asp75, His97, and Asp149.

The protein belongs to the PPase class C family. Mn(2+) is required as a cofactor.

It localises to the cytoplasm. The enzyme catalyses diphosphate + H2O = 2 phosphate + H(+). This Staphylococcus haemolyticus (strain JCSC1435) protein is Probable manganese-dependent inorganic pyrophosphatase.